A 233-amino-acid chain; its full sequence is Aspartate/glutamate leucyltransferase (233 aa).

Belongs to the R-transferase family. Bpt subfamily.

It localises to the cytoplasm. It carries out the reaction N-terminal L-glutamyl-[protein] + L-leucyl-tRNA(Leu) = N-terminal L-leucyl-L-glutamyl-[protein] + tRNA(Leu) + H(+). It catalyses the reaction N-terminal L-aspartyl-[protein] + L-leucyl-tRNA(Leu) = N-terminal L-leucyl-L-aspartyl-[protein] + tRNA(Leu) + H(+). Functions in the N-end rule pathway of protein degradation where it conjugates Leu from its aminoacyl-tRNA to the N-termini of proteins containing an N-terminal aspartate or glutamate. The protein is Aspartate/glutamate leucyltransferase of Vibrio cholerae serotype O1 (strain ATCC 39315 / El Tor Inaba N16961).